The following is a 780-amino-acid chain: Myosin heavy chain kinase C (780 aa).

The Alpha-type protein kinase domain occupies 40–243 (IGDDLKPKWT…VCDFLKLKPI (204 aa)). A disordered region spans residues 310–495 (RIRAQQQQKS…MEQTPDRSEF (186 aa)). Low complexity predominate over residues 337–350 (QQSPSSPTSKPVPQ). Over residues 353 to 376 (KTPSQSNVVNKSPVSPPKENSNVK) the composition is skewed to polar residues. The span at 380–436 (DNINNNNSSISSNNDNSNNNNNNNDNINNSSNSSSVNSNSSSVSSSSSSSSSSSSSS) shows a compositional bias: low complexity. Residues 437-450 (TTNAAPISIQVSRN) are compositionally biased toward polar residues. Residues 458–488 (IQPSSAAASASSTSSSNVPTPESTSTSSMEQ) are compositionally biased toward low complexity. WD repeat units follow at residues 507 to 546 (DTVR…HVTN), 549 to 589 (AHGK…TIKE), 591 to 628 (KESN…CVKT), 631 to 668 (GHTR…ILTN), 671 to 708 (GHEG…CVNT), and 748 to 780 (NTRS…WDKM).

This sequence belongs to the protein kinase superfamily. Alpha-type protein kinase family. ALPK subfamily. Interacts with myosin II heavy chain (mhcA). In terms of processing, autophosphorylated in vitro.

The protein resides in the cytoplasm. It is found in the cell cortex. The protein localises to the membrane. It localises to the cleavage furrow. The catalysed reaction is L-threonyl-[myosin heavy-chain] + ATP = O-phospho-L-threonyl-[myosin heavy-chain] + ADP + H(+). Phosphorylates threonine at 'Thr-1823', 'Thr-1833' and 'Thr-2029' in the C-terminal tail region of myosin II heavy chain (mhcA). This phosphorylation is critical in actin-activated ATPase activity of the myosin and regulating the assembly and disassembly of myosin II filament. In vitro, catalytic domain phosphorylates mhcA, myelin basic protein, myosin regulatory light chain, casein and caldesmon. Drives the disassembly of myosin II filaments for efficient cytokinesis and recycling of myosin II that occurs during late cytokinesis. Can be activated in vitro by autophosphorylation. This Dictyostelium discoideum (Social amoeba) protein is Myosin heavy chain kinase C (mhkC).